Reading from the N-terminus, the 129-residue chain is NHP2-like protein 1 homolog (129 aa).

This sequence belongs to the eukaryotic ribosomal protein eL8 family.

Its subcellular location is the nucleus. The protein localises to the nucleolus. Its function is as follows. Binds to the 5'-stem-loop of U4 snRNA and may play a role in the late stage of spliceosome assembly. The protein undergoes a conformational change upon RNA-binding. In Dictyostelium discoideum (Social amoeba), this protein is NHP2-like protein 1 homolog.